A 224-amino-acid polypeptide reads, in one-letter code: LexA repressor (224 aa).

The segment at residues 29–49 is a DNA-binding region (H-T-H motif); the sequence is RAEIARALGFRSPNAAEDHLK. Catalysis depends on for autocatalytic cleavage activity residues Ser142 and Lys179.

The protein belongs to the peptidase S24 family. In terms of assembly, homodimer.

The catalysed reaction is Hydrolysis of Ala-|-Gly bond in repressor LexA.. Functionally, represses a number of genes involved in the response to DNA damage (SOS response), including recA and lexA. In the presence of single-stranded DNA, RecA interacts with LexA causing an autocatalytic cleavage which disrupts the DNA-binding part of LexA, leading to derepression of the SOS regulon and eventually DNA repair. This is LexA repressor from Bordetella petrii (strain ATCC BAA-461 / DSM 12804 / CCUG 43448).